A 283-amino-acid polypeptide reads, in one-letter code: Diaminopimelate epimerase (283 aa).

The substrate site is built by Asn-13 and Asn-66. The Proton donor role is filled by Cys-75. Substrate contacts are provided by residues 76-77 (GN), Asn-165, Asn-198, and 216-217 (ER). The active-site Proton acceptor is the Cys-225. 226–227 (GT) lines the substrate pocket.

Belongs to the diaminopimelate epimerase family. Homodimer.

It localises to the cytoplasm. The enzyme catalyses (2S,6S)-2,6-diaminopimelate = meso-2,6-diaminopimelate. It functions in the pathway amino-acid biosynthesis; L-lysine biosynthesis via DAP pathway; DL-2,6-diaminopimelate from LL-2,6-diaminopimelate: step 1/1. Its function is as follows. Catalyzes the stereoinversion of LL-2,6-diaminopimelate (L,L-DAP) to meso-diaminopimelate (meso-DAP), a precursor of L-lysine and an essential component of the bacterial peptidoglycan. This is Diaminopimelate epimerase from Acaryochloris marina (strain MBIC 11017).